We begin with the raw amino-acid sequence, 205 residues long: MPVGVPKVPFRAPGDEDATWVDLYNRLYRERLLFLAQDINNEIANQLMGLMVYLSAEDANKEIFSFINCPGGSVIPGVGLYRMMQAIVPDVNTICMGVAASMGSFILIGGEMPKRIALPHARVMIHQPASSYYDGSAADFHNESKHVTLVREYITECYIERTGQPEEVIQRDLNRDVFMSATEAQAYGIVDVVAEDPLIFNRFLK.

The Nucleophile role is filled by S101. H126 is a catalytic residue.

This sequence belongs to the peptidase S14 family. As to quaternary structure, component of the chloroplastic Clp protease core complex.

It localises to the plastid. The protein resides in the chloroplast stroma. The catalysed reaction is Hydrolysis of proteins to small peptides in the presence of ATP and magnesium. alpha-casein is the usual test substrate. In the absence of ATP, only oligopeptides shorter than five residues are hydrolyzed (such as succinyl-Leu-Tyr-|-NHMec, and Leu-Tyr-Leu-|-Tyr-Trp, in which cleavage of the -Tyr-|-Leu- and -Tyr-|-Trp bonds also occurs).. Cleaves peptides in various proteins in a process that requires ATP hydrolysis. Has a chymotrypsin-like activity. Plays a major role in the degradation of misfolded proteins. This chain is ATP-dependent Clp protease proteolytic subunit, found in Pinus contorta (Shore pine).